The primary structure comprises 406 residues: MNKALKILQERGFIQQCTDLQALSDRMDKGQIAFYTGTDPTGPSLHIGHMVPIFALKHLCREGHKGVVLVGGGTSRIGDPSGKTEMRKMLSYDELDKNAASIQKQIEKFLAKDIKNVRFVNNKDWLADLNYIDFLRDIGSHFSVNKMLSFEAYKKRMETGLSFLEFNYQLLQSYDFLMLNQNYNIELQIGGDDQWGNMVAGSDLIRRKGGGEVFALTFSLVTRADGQKMGKSEKGAIFLDTALVSPYDFFQYWRNTADADVEKFMLLFTFLSIEEIKSVCAGDINKAKERLAFEVTALIHGKEEAEKALEGARAAFSGGGNKDAMPTANLSLSKLNEGIGIIDLFAEAGLASTKSDARRLVEQGGAFINEEKISDIKALIGKEKLDKDNEMILRAGKKRFMRIIFS.

An L-tyrosine-binding site is contributed by Tyr35. Residues 40-49 (PTGPSLHIGH) carry the 'HIGH' region motif. L-tyrosine is bound by residues Tyr168 and Gln172. The 'KMSKS' region signature appears at 228-232 (KMGKS). Lys231 contributes to the ATP binding site. The 67-residue stretch at 339–405 (IGIIDLFAEA…GKKRFMRIIF (67 aa)) folds into the S4 RNA-binding domain.

This sequence belongs to the class-I aminoacyl-tRNA synthetase family. TyrS type 1 subfamily. Homodimer.

It is found in the cytoplasm. It catalyses the reaction tRNA(Tyr) + L-tyrosine + ATP = L-tyrosyl-tRNA(Tyr) + AMP + diphosphate + H(+). Functionally, catalyzes the attachment of tyrosine to tRNA(Tyr) in a two-step reaction: tyrosine is first activated by ATP to form Tyr-AMP and then transferred to the acceptor end of tRNA(Tyr). This chain is Tyrosine--tRNA ligase, found in Treponema denticola (strain ATCC 35405 / DSM 14222 / CIP 103919 / JCM 8153 / KCTC 15104).